A 319-amino-acid chain; its full sequence is Cytochrome f (319 aa).

A signal peptide spans methionine 1–alanine 34. Tyrosine 35, cysteine 55, cysteine 58, and histidine 59 together coordinate heme. Residues valine 285 to lysine 305 form a helical membrane-spanning segment.

It belongs to the cytochrome f family. As to quaternary structure, the 4 large subunits of the cytochrome b6-f complex are cytochrome b6, subunit IV (17 kDa polypeptide, petD), cytochrome f and the Rieske protein, while the 4 small subunits are PetG, PetL, PetM and PetN. The complex functions as a dimer. Requires heme as cofactor.

The protein resides in the plastid. The protein localises to the chloroplast thylakoid membrane. Its function is as follows. Component of the cytochrome b6-f complex, which mediates electron transfer between photosystem II (PSII) and photosystem I (PSI), cyclic electron flow around PSI, and state transitions. The polypeptide is Cytochrome f (Pinus koraiensis (Korean pine)).